Consider the following 466-residue polypeptide: Ribulose bisphosphate carboxylase large chain (466 aa).

Lysine 4 carries the N6,N6,N6-trimethyllysine modification. 2 residues coordinate substrate: asparagine 113 and threonine 163. The active-site Proton acceptor is the lysine 165. Lysine 167 serves as a coordination point for substrate. Positions 191, 193, and 194 each coordinate Mg(2+). Position 191 is an N6-carboxylysine (lysine 191). Histidine 284 (proton acceptor) is an active-site residue. Substrate-binding residues include arginine 285, histidine 317, and serine 369.

The protein belongs to the RuBisCO large chain family. Type I subfamily. As to quaternary structure, heterohexadecamer of 8 large chains and 8 small chains; disulfide-linked. The disulfide link is formed within the large subunit homodimers. Mg(2+) is required as a cofactor. In terms of processing, the disulfide bond which can form in the large chain dimeric partners within the hexadecamer appears to be associated with oxidative stress and protein turnover.

It is found in the plastid. The protein localises to the chloroplast. It carries out the reaction 2 (2R)-3-phosphoglycerate + 2 H(+) = D-ribulose 1,5-bisphosphate + CO2 + H2O. The enzyme catalyses D-ribulose 1,5-bisphosphate + O2 = 2-phosphoglycolate + (2R)-3-phosphoglycerate + 2 H(+). RuBisCO catalyzes two reactions: the carboxylation of D-ribulose 1,5-bisphosphate, the primary event in carbon dioxide fixation, as well as the oxidative fragmentation of the pentose substrate in the photorespiration process. Both reactions occur simultaneously and in competition at the same active site. The protein is Ribulose bisphosphate carboxylase large chain of Justicia odora (Water willow).